Here is a 557-residue protein sequence, read N- to C-terminus: Dihydroxy-acid dehydratase (557 aa).

Residue C47 coordinates [2Fe-2S] cluster. D79 lines the Mg(2+) pocket. C120 is a [2Fe-2S] cluster binding site. Mg(2+) is bound by residues D121 and K122. K122 is modified (N6-carboxylysine). Residue C192 participates in [2Fe-2S] cluster binding. Residue E444 participates in Mg(2+) binding. Residue S470 is the Proton acceptor of the active site.

This sequence belongs to the IlvD/Edd family. In terms of assembly, homodimer. Requires [2Fe-2S] cluster as cofactor. It depends on Mg(2+) as a cofactor.

It carries out the reaction (2R)-2,3-dihydroxy-3-methylbutanoate = 3-methyl-2-oxobutanoate + H2O. It catalyses the reaction (2R,3R)-2,3-dihydroxy-3-methylpentanoate = (S)-3-methyl-2-oxopentanoate + H2O. It participates in amino-acid biosynthesis; L-isoleucine biosynthesis; L-isoleucine from 2-oxobutanoate: step 3/4. It functions in the pathway amino-acid biosynthesis; L-valine biosynthesis; L-valine from pyruvate: step 3/4. Functionally, functions in the biosynthesis of branched-chain amino acids. Catalyzes the dehydration of (2R,3R)-2,3-dihydroxy-3-methylpentanoate (2,3-dihydroxy-3-methylvalerate) into 2-oxo-3-methylpentanoate (2-oxo-3-methylvalerate) and of (2R)-2,3-dihydroxy-3-methylbutanoate (2,3-dihydroxyisovalerate) into 2-oxo-3-methylbutanoate (2-oxoisovalerate), the penultimate precursor to L-isoleucine and L-valine, respectively. This Synechococcus sp. (strain CC9902) protein is Dihydroxy-acid dehydratase.